A 114-amino-acid chain; its full sequence is Cystatin Pr15a (114 aa).

The N-terminal stretch at 1–22 (MFTVKLLAFMVVAVSLQHLAEA) is a signal peptide. The Cystatin domain occupies 29 to 83 (GCPVEVDPNREDIKKSLAHVMAAKNSPDELVRIIKASTQVVNGIKYKVVFEVKNP).

This sequence belongs to the cystatin family. As to expression, expressed by the venom gland (anterior main gland) (at protein level).

Its subcellular location is the secreted. This Platymeris rhadamanthus (Red spot assassin bug) protein is Cystatin Pr15a.